Reading from the N-terminus, the 143-residue chain is MKINVINQQELREINSKKIKDIAKKVLLNEVGKGNFELNILITDDKSITEFNKYRGKSTPTDVLSFSYGLSEPVIGDIVISVESIEKQAPDFGNSFEEEFYYILIHGLLHIVGYDHENSEEDAKKMFEVQDQYFHQLIKDRRR.

Residues His106, His110, and His116 each coordinate Zn(2+).

This sequence belongs to the endoribonuclease YbeY family. Requires Zn(2+) as cofactor.

The protein resides in the cytoplasm. Its function is as follows. Single strand-specific metallo-endoribonuclease involved in late-stage 70S ribosome quality control and in maturation of the 3' terminus of the 16S rRNA. In Petrotoga mobilis (strain DSM 10674 / SJ95), this protein is Endoribonuclease YbeY.